The chain runs to 126 residues: Aspartate 1-decarboxylase (126 aa).

Ser25 functions as the Schiff-base intermediate with substrate; via pyruvic acid in the catalytic mechanism. Position 25 is a pyruvic acid (Ser) (Ser25). Thr57 contributes to the substrate binding site. Tyr58 functions as the Proton donor in the catalytic mechanism. 73–75 (GAA) contacts substrate.

The protein belongs to the PanD family. As to quaternary structure, heterooctamer of four alpha and four beta subunits. It depends on pyruvate as a cofactor. In terms of processing, is synthesized initially as an inactive proenzyme, which is activated by self-cleavage at a specific serine bond to produce a beta-subunit with a hydroxyl group at its C-terminus and an alpha-subunit with a pyruvoyl group at its N-terminus.

The protein resides in the cytoplasm. It carries out the reaction L-aspartate + H(+) = beta-alanine + CO2. Its pathway is cofactor biosynthesis; (R)-pantothenate biosynthesis; beta-alanine from L-aspartate: step 1/1. Functionally, catalyzes the pyruvoyl-dependent decarboxylation of aspartate to produce beta-alanine. The sequence is that of Aspartate 1-decarboxylase from Yersinia pseudotuberculosis serotype IB (strain PB1/+).